A 496-amino-acid polypeptide reads, in one-letter code: NAD(P)H-quinone oxidoreductase subunit 2, chloroplastic (496 aa).

Helical transmembrane passes span 14–34, 42–62, 79–99, 109–129, 133–153, 167–187, 210–230, 244–264, 281–301, 305–325, 334–354, 377–397, 400–420, and 469–489; these read SFLP…LDLV, MLVK…IQQW, FTTC…PLSF, LTEF…LSSA, ITIF…TGYV, LIIG…LYGL, LASW…LSLV, PTPV…ALTI, ILQI…MVET, RILT…IVAG, LVYM…IILF, ASCL…TGFF, ILLF…TGIF, and IYLC…VIYF.

Belongs to the complex I subunit 2 family. NDH is composed of at least 16 different subunits, 5 of which are encoded in the nucleus.

Its subcellular location is the plastid. It localises to the chloroplast thylakoid membrane. It catalyses the reaction a plastoquinone + NADH + (n+1) H(+)(in) = a plastoquinol + NAD(+) + n H(+)(out). The enzyme catalyses a plastoquinone + NADPH + (n+1) H(+)(in) = a plastoquinol + NADP(+) + n H(+)(out). Its function is as follows. NDH shuttles electrons from NAD(P)H:plastoquinone, via FMN and iron-sulfur (Fe-S) centers, to quinones in the photosynthetic chain and possibly in a chloroplast respiratory chain. The immediate electron acceptor for the enzyme in this species is believed to be plastoquinone. Couples the redox reaction to proton translocation, and thus conserves the redox energy in a proton gradient. This chain is NAD(P)H-quinone oxidoreductase subunit 2, chloroplastic, found in Chara vulgaris (Common stonewort).